The sequence spans 434 residues: ATP phosphoribosyltransferase regulatory subunit (434 aa).

It belongs to the class-II aminoacyl-tRNA synthetase family. HisZ subfamily. In terms of assembly, heteromultimer composed of HisG and HisZ subunits.

It is found in the cytoplasm. Its pathway is amino-acid biosynthesis; L-histidine biosynthesis; L-histidine from 5-phospho-alpha-D-ribose 1-diphosphate: step 1/9. Required for the first step of histidine biosynthesis. May allow the feedback regulation of ATP phosphoribosyltransferase activity by histidine. The protein is ATP phosphoribosyltransferase regulatory subunit of Geobacter metallireducens (strain ATCC 53774 / DSM 7210 / GS-15).